The chain runs to 355 residues: WD repeat domain phosphoinositide-interacting protein 4 (355 aa).

2 WD repeats span residues 2–40 (SQQR…EKGH) and 185–225 (AHQS…QLVE). The L/FRRG motif signature appears at 226 to 229 (LRRG). Residues 230 to 269 (TDPATLYCINFSHDSSFLCSSSDKGTVHIFALKDTKLNRR) form a WD 3 repeat.

It belongs to the WD repeat PROPPIN family.

It is found in the preautophagosomal structure. Its function is as follows. Component of the autophagy machinery that controls the major intracellular degradation process by which cytoplasmic materials are packaged into autophagosomes and delivered to lysosomes for degradation. Binds phosphatidylinositol 3-phosphate (PtdIns3P). This chain is WD repeat domain phosphoinositide-interacting protein 4 (wdr45), found in Xenopus laevis (African clawed frog).